The sequence spans 471 residues: Trigger factor (471 aa).

One can recognise a PPIase FKBP-type domain in the interval 169 to 264; that stretch reads GDVAVVDFKG…LKEIKEKELP (96 aa).

This sequence belongs to the FKBP-type PPIase family. Tig subfamily.

The protein localises to the cytoplasm. It carries out the reaction [protein]-peptidylproline (omega=180) = [protein]-peptidylproline (omega=0). Involved in protein export. Acts as a chaperone by maintaining the newly synthesized protein in an open conformation. Functions as a peptidyl-prolyl cis-trans isomerase. The sequence is that of Trigger factor from Nostoc sp. (strain PCC 7120 / SAG 25.82 / UTEX 2576).